We begin with the raw amino-acid sequence, 82 residues long: uncharacterized protein (82 aa).

The span at 29-38 shows a compositional bias: low complexity; it reads TATKSTSSGS. A disordered region spans residues 29-64; the sequence is TATKSTSSGSVPSFFTESTSTPLNQSKTNTSTLNKS. Residues 39-50 show a composition bias toward polar residues; that stretch reads VPSFFTESTSTP. The segment covering 51 to 64 has biased composition (low complexity); the sequence is LNQSKTNTSTLNKS.

This is an uncharacterized protein from Dictyostelium discoideum (Social amoeba).